The sequence spans 269 residues: Intermembrane phospholipid transport system ATP-binding protein MlaF (269 aa).

In terms of domain architecture, ABC transporter spans 9–245; sequence VDMRDVSFTR…PDPRVRQFLD (237 aa). 41-48 contributes to the ATP binding site; it reads GPSGIGKT.

It belongs to the ABC transporter superfamily. MlaF family. As to quaternary structure, the complex is composed of two ATP-binding proteins (MlaF), two transmembrane proteins (MlaE), two cytoplasmic solute-binding proteins (MlaB) and six periplasmic solute-binding proteins (MlaD).

Its subcellular location is the cell inner membrane. Its function is as follows. Part of the ABC transporter complex MlaFEDB, which is involved in a phospholipid transport pathway that maintains lipid asymmetry in the outer membrane by retrograde trafficking of phospholipids from the outer membrane to the inner membrane. Responsible for energy coupling to the transport system. This Escherichia coli O157:H7 protein is Intermembrane phospholipid transport system ATP-binding protein MlaF.